Reading from the N-terminus, the 438-residue chain is Argininosuccinate lyase (438 aa).

It belongs to the lyase 1 family. Argininosuccinate lyase subfamily.

The protein localises to the cytoplasm. The enzyme catalyses 2-(N(omega)-L-arginino)succinate = fumarate + L-arginine. The protein operates within amino-acid biosynthesis; L-arginine biosynthesis; L-arginine from L-ornithine and carbamoyl phosphate: step 3/3. The polypeptide is Argininosuccinate lyase (Clostridium kluyveri (strain NBRC 12016)).